Consider the following 337-residue polypeptide: tRNA N6-adenosine threonylcarbamoyltransferase (337 aa).

The Fe cation site is built by histidine 111 and histidine 115. Substrate is bound by residues 134-138 (LVSGG), aspartate 167, glycine 180, and asparagine 272. Aspartate 300 contacts Fe cation.

It belongs to the KAE1 / TsaD family. It depends on Fe(2+) as a cofactor.

It localises to the cytoplasm. The enzyme catalyses L-threonylcarbamoyladenylate + adenosine(37) in tRNA = N(6)-L-threonylcarbamoyladenosine(37) in tRNA + AMP + H(+). Its function is as follows. Required for the formation of a threonylcarbamoyl group on adenosine at position 37 (t(6)A37) in tRNAs that read codons beginning with adenine. Is involved in the transfer of the threonylcarbamoyl moiety of threonylcarbamoyl-AMP (TC-AMP) to the N6 group of A37, together with TsaE and TsaB. TsaD likely plays a direct catalytic role in this reaction. The polypeptide is tRNA N6-adenosine threonylcarbamoyltransferase (Shewanella amazonensis (strain ATCC BAA-1098 / SB2B)).